A 778-amino-acid chain; its full sequence is General transcription and DNA repair factor IIH helicase subunit XPD/RAD3 (778 aa).

The Helicase ATP-binding domain maps to 7 to 285; that stretch reads DLPVLFPYPK…KVDSQKLQDE (279 aa). 42 to 49 provides a ligand contact to ATP; sequence MPSGTGKT. [4Fe-4S] cluster contacts are provided by cysteine 115, cysteine 133, cysteine 156, and cysteine 191. The short motif at 235–238 is the DEAH box element; sequence DEAH. Basic and acidic residues predominate over residues 750–765; the sequence is SRKDQGGFIENENKEG. The segment at 750–778 is disordered; it reads SRKDQGGFIENENKEGEQDEDEDEDIEMQ. A compositionally biased stretch (acidic residues) spans 766–778; it reads EQDEDEDEDIEMQ.

It belongs to the helicase family. RAD3/XPD subfamily. Component of the 7-subunit TFIIH core complex composed of XPB/SSL2, XPD/RAD3, SSL1, TFB1, TFB2, TFB4 and TFB5, which is active in NER. The core complex associates with the 3-subunit CTD-kinase module TFIIK composed of CCL1, KIN28 and TFB3 to form the 10-subunit holoenzyme (holo-TFIIH) active in transcription. An additionnal subunit, TFB6, plays a role in the dissociation of the SSL2 helicase from TFIIH after transcription initiation. [4Fe-4S] cluster is required as a cofactor. The cofactor is Mg(2+).

Its subcellular location is the nucleus. The catalysed reaction is Couples ATP hydrolysis with the unwinding of duplex DNA at the replication fork by translocating in the 5'-3' direction. This creates two antiparallel DNA single strands (ssDNA). The leading ssDNA polymer is the template for DNA polymerase III holoenzyme which synthesizes a continuous strand.. It catalyses the reaction ATP + H2O = ADP + phosphate + H(+). In terms of biological role, ATP-dependent 5'-3' DNA helicase. Component of the general transcription and DNA repair factor IIH (TFIIH) core complex, which is involved in general and transcription-coupled nucleotide excision repair (NER) of damaged DNA and, when complexed to TFIIK, in RNA transcription by RNA polymerase II. In NER, TFIIH acts by opening DNA around the lesion to allow the excision of the damaged oligonucleotide and its replacement by a new DNA fragment. The ATP-dependent helicase activity of XPD/RAD3 is required for DNA opening. In transcription, TFIIH has an essential role in transcription initiation. When the pre-initiation complex (PIC) has been established, TFIIH is required for promoter opening and promoter escape. Phosphorylation of the C-terminal tail (CTD) of the largest subunit of RNA polymerase II by the kinase module TFIIK controls the initiation of transcription. XPD/RAD3 acts by forming a bridge between TFIIK and the core-TFIIH complex. Involved in the maintenance of the fidelity of DNA replication. Has single-stranded DNA-dependent ATPase activity. 5'-3' DNA helicase activity requires ATP (dATP partially substitutes), will unwind over 800 bp dsDNA. Able to unwind an RNA:DNA hybrid. The protein is General transcription and DNA repair factor IIH helicase subunit XPD/RAD3 of Saccharomyces cerevisiae (strain ATCC 204508 / S288c) (Baker's yeast).